We begin with the raw amino-acid sequence, 552 residues long: Chaperonin GroEL (552 aa).

Residues 30 to 33 (TLGP), Lys-51, 87 to 91 (DGTTT), Gly-415, and Asp-499 each bind ATP.

The protein belongs to the chaperonin (HSP60) family. As to quaternary structure, forms a cylinder of 14 subunits composed of two heptameric rings stacked back-to-back. Interacts with the co-chaperonin GroES.

It is found in the cytoplasm. It catalyses the reaction ATP + H2O + a folded polypeptide = ADP + phosphate + an unfolded polypeptide.. In terms of biological role, together with its co-chaperonin GroES, plays an essential role in assisting protein folding. The GroEL-GroES system forms a nano-cage that allows encapsulation of the non-native substrate proteins and provides a physical environment optimized to promote and accelerate protein folding. This chain is Chaperonin GroEL, found in Hamiltonella defensa subsp. Acyrthosiphon pisum (strain 5AT).